The chain runs to 333 residues: Taste receptor type 2 member 123 (333 aa).

The Extracellular portion of the chain corresponds to 1-14 (MFSQKTNYSHLFTF). A helical membrane pass occupies residues 15-37 (SIIFYVEIVTGILGNGFIALVNI). Residues 38–57 (MDWLKRRRISTADQILTALA) lie on the Cytoplasmic side of the membrane. Residues 58–77 (LTRLIYVWSVLICILLLFLC) traverse the membrane as a helical segment. The Extracellular segment spans residues 78–91 (PHLSMRPEMFTAIG). Residues 92–114 (VIWVVDNHFSIWLATCLGVFYFL) form a helical membrane-spanning segment. Over 115 to 133 (KIASFSNSLFLYLKWRVKK) the chain is Cytoplasmic. A helical membrane pass occupies residues 134–156 (VVLMIILISLIFLMLNISSLGMY). Residues 157–204 (DHFSIDVYEGNMSYNLVDSTHFPRIFLFTNSSKVFLIANSSHVFLPIN) lie on the Extracellular side of the membrane. N-linked (GlcNAc...) asparagine glycans are attached at residues asparagine 167, asparagine 186, and asparagine 195. Residues 205 to 227 (SLFMLIPFTVSLVAFFVLFLSLW) form a helical membrane-spanning segment. The Cytoplasmic segment spans residues 228–250 (KHHKKMQVNAKGPRDASTMAHTK). The chain crosses the membrane as a helical span at residues 251-273 (ALQIGFSFLLLYAIYLLFIITGI). The Extracellular portion of the chain corresponds to 274–282 (LNLDLMRCI). A helical transmembrane segment spans residues 283-305 (VILLFDHISGAVFSISHSFVLIL). The Cytoplasmic portion of the chain corresponds to 306–333 (GNSKLRQATLSVLPCLRCRSKDMDTVVF).

Belongs to the G-protein coupled receptor T2R family. As to expression, expressed in subsets of taste receptor cells of the tongue and palate epithelium and exclusively in gustducin-positive cells. Expressed in the antrum and fundus (part of the stomach), duodenum and in gastric endocrine cells.

It localises to the membrane. Gustducin-coupled receptor implicated in the perception of bitter compounds in the oral cavity and the gastrointestinal tract. Signals through PLCB2 and the calcium-regulated cation channel TRPM5. This Rattus norvegicus (Rat) protein is Taste receptor type 2 member 123 (Tas2r123).